We begin with the raw amino-acid sequence, 111 residues long: Probable 4-amino-4-deoxy-L-arabinose-phosphoundecaprenol flippase subunit ArnE (111 aa).

Residues 1 to 35 (MIWLTLVFASLLSVAGQLCQKQATCFAAVNKRRKH) are Cytoplasmic-facing. Residues 36–56 (IVLWLGLALACLGLAMVLWLL) traverse the membrane as a helical segment. Residues 40–109 (LGLALACLGL…IIGGIVILGS (70 aa)) form the EamA domain. Residues 57 to 60 (VLQN) lie on the Periplasmic side of the membrane. Residues 61-81 (VPVGIAYPMLSLNFVWVTLAA) traverse the membrane as a helical segment. Residues 82-87 (VKLWHE) are Cytoplasmic-facing. The helical transmembrane segment at 88–108 (PVSLRHWCGVAFIIGGIVILG) threads the bilayer. At 109-111 (STV) the chain is on the periplasmic side.

Belongs to the ArnE family. In terms of assembly, heterodimer of ArnE and ArnF.

It is found in the cell inner membrane. It functions in the pathway bacterial outer membrane biogenesis; lipopolysaccharide biosynthesis. Functionally, translocates 4-amino-4-deoxy-L-arabinose-phosphoundecaprenol (alpha-L-Ara4N-phosphoundecaprenol) from the cytoplasmic to the periplasmic side of the inner membrane. The polypeptide is Probable 4-amino-4-deoxy-L-arabinose-phosphoundecaprenol flippase subunit ArnE (Escherichia coli (strain UTI89 / UPEC)).